The primary structure comprises 378 residues: AimR transcriptional regulator (378 aa).

In terms of assembly, homodimer. Interacts with the viral arbitrium peptide, this interaction changes the oligomeric state of AimR from an active dimer to an inactive monomer leading to lysogeny.

In terms of biological role, transcriptional regulator which is part of the latency-replication switch system that decides at the onset of infection whether to replicate and lyse the host or to lysogenize (latency) and keep the host viable. Activates the transcription of the aimX locus. Transcriptional activation of aimX seems to lead to the productive viral replication (lytic cycle), aimX possibly acting as a regulatory non-coding RNA. This Bacillus phage phi3T (Bacteriophage phi-3T) protein is AimR transcriptional regulator (aimR).